The chain runs to 230 residues: Exosome complex component Rrp4 (230 aa).

The S1 motif domain maps to Asn60–Lys129. The 59-residue stretch at Glu137–Ile195 folds into the KH domain.

It belongs to the RRP4 family. As to quaternary structure, component of the archaeal exosome complex. Forms a trimer of Rrp4 and/or Csl4 subunits. The trimer associates with a hexameric ring-like arrangement composed of 3 Rrp41-Rrp42 heterodimers.

It is found in the cytoplasm. In terms of biological role, non-catalytic component of the exosome, which is a complex involved in RNA degradation. Increases the RNA binding and the efficiency of RNA degradation. Confers strong poly(A) specificity to the exosome. In Picrophilus torridus (strain ATCC 700027 / DSM 9790 / JCM 10055 / NBRC 100828 / KAW 2/3), this protein is Exosome complex component Rrp4.